Consider the following 1755-residue polypeptide: Transposon TyH3 Gag-Pol polyprotein (1755 aa).

Polar residues-rich tracts occupy residues Met1–Ser23, Thr48–Ser60, and Gln127–Phe152. Disordered stretches follow at residues Met1–Gln93, Pro126–Pro173, and Gly352–Thr421. Over residues Thr153 to Thr165 the composition is skewed to low complexity. Residues Asn299–His401 are RNA-binding. The segment covering Asn402–Ser418 has biased composition (low complexity). Position 416 is a phosphoserine (Ser416). The active-site For protease activity; shared with dimeric partner is Asp461. The tract at residues Asn583–Cys640 is integrase-type zinc finger-like. The 176-residue stretch at Asn660–Pro835 folds into the Integrase catalytic domain. 2 residues coordinate Mg(2+): Asp671 and Asp736. Disordered stretches follow at residues Ser956–Lys1087, Arg1092–Pro1111, and Asp1130–Thr1187. The segment covering Ser960–Thr969 has biased composition (low complexity). Polar residues predominate over residues Ser1005–Thr1015. Positions Glu1038 to Ser1053 are enriched in basic and acidic residues. 2 stretches are compositionally biased toward polar residues: residues Tyr1054–Asp1082 and Pro1101–Pro1111. Positions Lys1178 to Arg1212 match the Bipartite nuclear localization signal motif. One can recognise a Reverse transcriptase Ty1/copia-type domain in the interval Asn1338–Gln1476. Residues Asp1346, Asp1427, Asp1428, Asp1610, Glu1652, and Asp1685 each coordinate Mg(2+). One can recognise an RNase H Ty1/copia-type domain in the interval Asp1610 to Lys1752.

As to quaternary structure, the capsid protein forms a homotrimer, from which the VLPs are assembled. The protease is a homodimer, whose active site consists of two apposed aspartic acid residues. In terms of processing, initially, virus-like particles (VLPs) are composed of the structural unprocessed proteins Gag and Gag-Pol, and also contain the host initiator methionine tRNA (tRNA(i)-Met) which serves as a primer for minus-strand DNA synthesis, and a dimer of genomic Ty RNA. Processing of the polyproteins occurs within the particle and proceeds by an ordered pathway, called maturation. First, the protease (PR) is released by autocatalytic cleavage of the Gag-Pol polyprotein yielding capsid protein p45 and a Pol-p154 precursor protein. This cleavage is a prerequisite for subsequent processing of Pol-p154 at the remaining sites to release the mature structural and catalytic proteins. Maturation takes place prior to the RT reaction and is required to produce transposition-competent VLPs.

Its subcellular location is the cytoplasm. The protein localises to the nucleus. It carries out the reaction DNA(n) + a 2'-deoxyribonucleoside 5'-triphosphate = DNA(n+1) + diphosphate. The enzyme catalyses Endonucleolytic cleavage to 5'-phosphomonoester.. Its function is as follows. Capsid protein (CA) is the structural component of the virus-like particle (VLP), forming the shell that encapsulates the retrotransposons dimeric RNA genome. The particles are assembled from trimer-clustered units and there are holes in the capsid shells that allow for the diffusion of macromolecules. CA also has nucleocapsid-like chaperone activity, promoting primer tRNA(i)-Met annealing to the multipartite primer-binding site (PBS), dimerization of Ty1 RNA and initiation of reverse transcription. In terms of biological role, the aspartyl protease (PR) mediates the proteolytic cleavages of the Gag and Gag-Pol polyproteins after assembly of the VLP. Reverse transcriptase/ribonuclease H (RT) is a multifunctional enzyme that catalyzes the conversion of the retro-elements RNA genome into dsDNA within the VLP. The enzyme displays a DNA polymerase activity that can copy either DNA or RNA templates, and a ribonuclease H (RNase H) activity that cleaves the RNA strand of RNA-DNA heteroduplexes during plus-strand synthesis and hydrolyzes RNA primers. The conversion leads to a linear dsDNA copy of the retrotransposon that includes long terminal repeats (LTRs) at both ends. Functionally, integrase (IN) targets the VLP to the nucleus, where a subparticle preintegration complex (PIC) containing at least integrase and the newly synthesized dsDNA copy of the retrotransposon must transit the nuclear membrane. Once in the nucleus, integrase performs the integration of the dsDNA into the host genome. This Saccharomyces cerevisiae (Baker's yeast) protein is Transposon TyH3 Gag-Pol polyprotein (TY1B).